We begin with the raw amino-acid sequence, 238 residues long: Ribonuclease PH (238 aa).

Phosphate is bound by residues R86 and 124–126; that span reads GTR.

Belongs to the RNase PH family. As to quaternary structure, homohexameric ring arranged as a trimer of dimers.

It carries out the reaction tRNA(n+1) + phosphate = tRNA(n) + a ribonucleoside 5'-diphosphate. In terms of biological role, phosphorolytic 3'-5' exoribonuclease that plays an important role in tRNA 3'-end maturation. Removes nucleotide residues following the 3'-CCA terminus of tRNAs; can also add nucleotides to the ends of RNA molecules by using nucleoside diphosphates as substrates, but this may not be physiologically important. Probably plays a role in initiation of 16S rRNA degradation (leading to ribosome degradation) during starvation. The polypeptide is Ribonuclease PH (Actinobacillus succinogenes (strain ATCC 55618 / DSM 22257 / CCUG 43843 / 130Z)).